The following is a 355-amino-acid chain: 1D-myo-inositol 2-acetamido-2-deoxy-alpha-D-glucopyranoside deacetylase 3 (355 aa).

Residues histidine 31, aspartate 34, and histidine 169 each coordinate Zn(2+).

It belongs to the MshB deacetylase family. Zn(2+) serves as cofactor.

It catalyses the reaction 1D-myo-inositol 2-acetamido-2-deoxy-alpha-D-glucopyranoside + H2O = 1D-myo-inositol 2-amino-2-deoxy-alpha-D-glucopyranoside + acetate. Functionally, catalyzes the deacetylation of 1D-myo-inositol 2-acetamido-2-deoxy-alpha-D-glucopyranoside (GlcNAc-Ins) in the mycothiol biosynthesis pathway. In Catenulispora acidiphila (strain DSM 44928 / JCM 14897 / NBRC 102108 / NRRL B-24433 / ID139908), this protein is 1D-myo-inositol 2-acetamido-2-deoxy-alpha-D-glucopyranoside deacetylase 3.